A 445-amino-acid polypeptide reads, in one-letter code: Oxysterols receptor LXR-alpha (445 aa).

2 disordered regions span residues 1-34 and 63-86; these read MSLW…QGGN and ALLP…KKGP. Residues 1–94 form a transactivation AF-1; required for ligand-independent transactivation function region; it reads MSLWLEASMP…GPAPKMLGNE (94 aa). The segment at residues 93–168 is a DNA-binding region (nuclear receptor); that stretch reads NELCSVCGDK…AGMREECVLS (76 aa). 2 NR C4-type zinc fingers span residues 96–116 and 132–156; these read CSVC…CEGC and CHSG…LRKC. Ser191 carries the post-translational modification Phosphoserine. A transactivation AF-2; required for ligand-dependent transactivation function; mediates interaction with CCAR2 region spans residues 203 to 445; the sequence is QLSPEQLGMI…LLSEIWDVHE (243 aa). The NR LBD domain occupies 207–445; sequence EQLGMIEKLV…LLSEIWDVHE (239 aa).

This sequence belongs to the nuclear hormone receptor family. NR1 subfamily. As to quaternary structure, heterodimer of NR1H3 and RXR (retinoic acid receptor). Interacts with CCAR2 (via N-terminus) in a ligand-independent manner. Interacts with SIRT1 and this interaction is inhibited by CCAR2. Post-translationally, ubiquitinated. Ubiquitination by UBR5 leads to its degradation: UBR5 specifically recognizes and binds ligand-bound NR1H3 when it is not associated with coactivators (NCOAs). In presence of NCOAs, the UBR5-degron is not accessible, preventing its ubiquitination and degradation.

Its subcellular location is the nucleus. It is found in the cytoplasm. Its function is as follows. Nuclear receptor that exhibits a ligand-dependent transcriptional activation activity. Interaction with retinoic acid receptor (RXR) shifts RXR from its role as a silent DNA-binding partner to an active ligand-binding subunit in mediating retinoid responses through target genes defined by LXRES. LXRES are DR4-type response elements characterized by direct repeats of two similar hexanuclotide half-sites spaced by four nucleotides. Plays an important role in the regulation of cholesterol homeostasis, regulating cholesterol uptake through MYLIP-dependent ubiquitination of LDLR, VLDLR and LRP8. Interplays functionally with RORA for the regulation of genes involved in liver metabolism. Induces LPCAT3-dependent phospholipid remodeling in endoplasmic reticulum (ER) membranes of hepatocytes, driving SREBF1 processing and lipogenesis. Via LPCAT3, triggers the incorporation of arachidonate into phosphatidylcholines of ER membranes, increasing membrane dynamics and enabling triacylglycerols transfer to nascent very low-density lipoprotein (VLDL) particles. Via LPCAT3 also counteracts lipid-induced ER stress response and inflammation, likely by modulating SRC kinase membrane compartmentalization and limiting the synthesis of lipid inflammatory mediators. The polypeptide is Oxysterols receptor LXR-alpha (Nr1h3) (Mus musculus (Mouse)).